The sequence spans 338 residues: Ketol-acid reductoisomerase (NADP(+)) (338 aa).

Positions 1–181 (MKIYYDKDCN…GGGKAGIIET (181 aa)) constitute a KARI N-terminal Rossmann domain. Residues 24 to 27 (YGSQ), K47, S50, S52, and 82 to 85 (DEIQ) contribute to the NADP(+) site. H107 is an active-site residue. G133 serves as a coordination point for NADP(+). The KARI C-terminal knotted domain occupies 182–327 (SFKEETETDL…ARLRSMMAWI (146 aa)). Positions 190, 194, 226, and 230 each coordinate Mg(2+). S251 serves as a coordination point for substrate.

This sequence belongs to the ketol-acid reductoisomerase family. Mg(2+) is required as a cofactor.

The catalysed reaction is (2R)-2,3-dihydroxy-3-methylbutanoate + NADP(+) = (2S)-2-acetolactate + NADPH + H(+). It carries out the reaction (2R,3R)-2,3-dihydroxy-3-methylpentanoate + NADP(+) = (S)-2-ethyl-2-hydroxy-3-oxobutanoate + NADPH + H(+). It functions in the pathway amino-acid biosynthesis; L-isoleucine biosynthesis; L-isoleucine from 2-oxobutanoate: step 2/4. The protein operates within amino-acid biosynthesis; L-valine biosynthesis; L-valine from pyruvate: step 2/4. Its function is as follows. Involved in the biosynthesis of branched-chain amino acids (BCAA). Catalyzes an alkyl-migration followed by a ketol-acid reduction of (S)-2-acetolactate (S2AL) to yield (R)-2,3-dihydroxy-isovalerate. In the isomerase reaction, S2AL is rearranged via a Mg-dependent methyl migration to produce 3-hydroxy-3-methyl-2-ketobutyrate (HMKB). In the reductase reaction, this 2-ketoacid undergoes a metal-dependent reduction by NADPH to yield (R)-2,3-dihydroxy-isovalerate. The chain is Ketol-acid reductoisomerase (NADP(+)) from Geotalea uraniireducens (strain Rf4) (Geobacter uraniireducens).